We begin with the raw amino-acid sequence, 2961 residues long: Zinc finger ZZ-type and EF-hand domain-containing protein 1 (2961 aa).

Residues 1–41 (MGNAPSHSSEDEAAAAGGEGWGPHQDWAAVSGTTPGPGVAA) form a disordered region. Residue Gly2 is the site of N-myristoyl glycine attachment. The region spanning 111–146 (CSSEQFEEAFAQFDAEGDGTVDAENMLEALKNSSGA) is the EF-hand domain. The DOC domain occupies 226–405 (LVQKEKESPG…AIWYWSLLTS (180 aa)). Phosphoserine is present on residues Ser240, Ser1475, Ser1488, and Ser1509. The interval 1446–1531 (TADETSHLQP…PTRRPPFTRG (86 aa)) is disordered. Residues 1485-1502 (GDQSPGLGTQPKLPSSSG) show a composition bias toward polar residues. Position 1512 is a phosphothreonine (Thr1512). The span at 1516 to 1531 (PLSPSTPTRRPPFTRG) shows a compositional bias: low complexity. Ser1518 carries the phosphoserine modification. Residues Thr1521 and Thr1523 each carry the phosphothreonine modification. A phosphoserine mark is found at Ser1537 and Ser1540. 2 ZZ-type zinc fingers span residues 1778-1833 (NVDI…FTCD) and 1827-1882 (NMEF…MVTI). Zn(2+)-binding residues include Cys1783, Cys1786, Cys1797, Cys1800, Cys1806, Cys1809, His1819, His1823, Cys1832, Cys1835, Cys1846, Cys1849, Cys1855, Cys1858, His1868, and His1872. Disordered stretches follow at residues 1994 to 2078 (AVQG…PSPE) and 2426 to 2455 (LELDERGDREEEVERPVSSPGDPEQKKLDP). Basic and acidic residues predominate over residues 2009-2027 (AVHEEIRPVDFKQRNKADK). Residues 2033–2043 (KDPSCQTQISD) show a composition bias toward polar residues. Residues 2426–2440 (LELDERGDREEEVER) are compositionally biased toward basic and acidic residues. Ser2444 is modified (phosphoserine). Residue Lys2667 is modified to N6-acetyllysine.

Interacts with KLF6 and KLF9. Interacts via (ZZ-type 2 zinc finger) with histone H3 trimethylated at 'Lys-4' (H3K4me3) and histone H3 acetylated at 'Lys-4' (H3K4ac). As to expression, expressed at low levels in cerebellum.

In terms of biological role, histone H3 reader which may act as a transcriptional coactivator for KLF6 and KLF9 transcription factors. This is Zinc finger ZZ-type and EF-hand domain-containing protein 1 from Homo sapiens (Human).